Here is a 141-residue protein sequence, read N- to C-terminus: Large ribosomal subunit protein uL11 (141 aa).

Belongs to the universal ribosomal protein uL11 family. As to quaternary structure, part of the ribosomal stalk of the 50S ribosomal subunit. Interacts with L10 and the large rRNA to form the base of the stalk. L10 forms an elongated spine to which L12 dimers bind in a sequential fashion forming a multimeric L10(L12)X complex. Post-translationally, one or more lysine residues are methylated.

Its function is as follows. Forms part of the ribosomal stalk which helps the ribosome interact with GTP-bound translation factors. The chain is Large ribosomal subunit protein uL11 from Prochlorococcus marinus (strain MIT 9211).